The sequence spans 398 residues: Succinate--CoA ligase [ADP-forming] subunit beta (398 aa).

The 246-residue stretch at 9-254 folds into the ATP-grasp domain; that stretch reads KALLHEFGVP…ETEEDAKEIE (246 aa). ATP contacts are provided by residues K46, 53–55, E109, S112, and E117; that span reads GRG. Mg(2+) contacts are provided by N209 and D223. Substrate is bound by residues N274 and 331-333; that span reads GIM.

Belongs to the succinate/malate CoA ligase beta subunit family. Heterotetramer of two alpha and two beta subunits. Requires Mg(2+) as cofactor.

The enzyme catalyses succinate + ATP + CoA = succinyl-CoA + ADP + phosphate. It catalyses the reaction GTP + succinate + CoA = succinyl-CoA + GDP + phosphate. It functions in the pathway carbohydrate metabolism; tricarboxylic acid cycle; succinate from succinyl-CoA (ligase route): step 1/1. Succinyl-CoA synthetase functions in the citric acid cycle (TCA), coupling the hydrolysis of succinyl-CoA to the synthesis of either ATP or GTP and thus represents the only step of substrate-level phosphorylation in the TCA. The beta subunit provides nucleotide specificity of the enzyme and binds the substrate succinate, while the binding sites for coenzyme A and phosphate are found in the alpha subunit. This Bradyrhizobium sp. (strain ORS 278) protein is Succinate--CoA ligase [ADP-forming] subunit beta.